Consider the following 290-residue polypeptide: MFKGSIVAIVTPFKNGAVDEEKLRELVEFQIENGTDAIVPCGTTGESSTLDYEEHDRVIEIVVEQVKKRVPVIAGTGSNSTKEAIEMTSHAKTLGADGALLVTPYYNKPTQEGLFLHYKAVADAVALPQILYNVPGRTGVNLLPETVARLAEHKNIVAIKEATGSLQQASEIIDLCGDKIDVFSGDDFITFPMMACGAKGVISVTANIMPKEVAALVDAFFAGKMEEARQWHLKLLKISNAMFIESNPVPVKTAVALMGKCSAEVRLPLAPLAEANKVKLVAIMKEYGLI.

A pyruvate-binding site is contributed by Thr44. The active-site Proton donor/acceptor is the Tyr132. The Schiff-base intermediate with substrate role is filled by Lys160. A pyruvate-binding site is contributed by Ile202.

This sequence belongs to the DapA family. Homotetramer; dimer of dimers.

It localises to the cytoplasm. The catalysed reaction is L-aspartate 4-semialdehyde + pyruvate = (2S,4S)-4-hydroxy-2,3,4,5-tetrahydrodipicolinate + H2O + H(+). It functions in the pathway amino-acid biosynthesis; L-lysine biosynthesis via DAP pathway; (S)-tetrahydrodipicolinate from L-aspartate: step 3/4. Catalyzes the condensation of (S)-aspartate-beta-semialdehyde [(S)-ASA] and pyruvate to 4-hydroxy-tetrahydrodipicolinate (HTPA). In Geotalea uraniireducens (strain Rf4) (Geobacter uraniireducens), this protein is 4-hydroxy-tetrahydrodipicolinate synthase.